Here is a 302-residue protein sequence, read N- to C-terminus: Putative thiol protease R355 (302 aa).

Active-site residues include His-182 and Asp-199. The active-site Nucleophile is Cys-244.

It belongs to the peptidase C48 family.

It is found in the virion. This Acanthamoeba polyphaga mimivirus (APMV) protein is Putative thiol protease R355.